A 600-amino-acid polypeptide reads, in one-letter code: DNA primase (600 aa).

Residues 38 to 62 form a CHC2-type zinc finger; the sequence is CPFHDEKTPSFIVYPTRGHYHCYGC. The 81-residue stretch at 253 to 333 folds into the Toprim domain; sequence KRVILVEGQA…GIAVIVCRLP (81 aa). Mg(2+) contacts are provided by Glu259, Asp304, and Asp306.

Belongs to the DnaG primase family. In terms of assembly, monomer. Interacts with DnaB. Zn(2+) is required as a cofactor. Requires Mg(2+) as cofactor.

It carries out the reaction ssDNA + n NTP = ssDNA/pppN(pN)n-1 hybrid + (n-1) diphosphate.. Its function is as follows. RNA polymerase that catalyzes the synthesis of short RNA molecules used as primers for DNA polymerase during DNA replication. The chain is DNA primase from Chlamydia muridarum (strain MoPn / Nigg).